A 715-amino-acid polypeptide reads, in one-letter code: Inducible lysine decarboxylase (715 aa).

K367 carries the N6-(pyridoxal phosphate)lysine modification.

The protein belongs to the Orn/Lys/Arg decarboxylase class-I family. Homodecamer. Interacts with RavA. It depends on pyridoxal 5'-phosphate as a cofactor.

It localises to the cytoplasm. It carries out the reaction L-lysine + H(+) = cadaverine + CO2. The polypeptide is Inducible lysine decarboxylase (cadA) (Escherichia coli O157:H7).